The primary structure comprises 550 residues: Glucose-6-phosphate isomerase (550 aa).

Glutamate 355 serves as the catalytic Proton donor. Residues histidine 386 and lysine 512 contribute to the active site.

This sequence belongs to the GPI family.

Its subcellular location is the cytoplasm. The catalysed reaction is alpha-D-glucose 6-phosphate = beta-D-fructose 6-phosphate. It participates in carbohydrate biosynthesis; gluconeogenesis. It functions in the pathway carbohydrate degradation; glycolysis; D-glyceraldehyde 3-phosphate and glycerone phosphate from D-glucose: step 2/4. Catalyzes the reversible isomerization of glucose-6-phosphate to fructose-6-phosphate. This Rhodococcus opacus (strain B4) protein is Glucose-6-phosphate isomerase.